The chain runs to 294 residues: Lipoyl synthase (294 aa).

7 residues coordinate [4Fe-4S] cluster: Cys-35, Cys-40, Cys-46, Cys-61, Cys-65, Cys-68, and Ser-273. In terms of domain architecture, Radical SAM core spans 47-262 (FRQRQATFLI…REQALSMGFE (216 aa)).

Belongs to the radical SAM superfamily. Lipoyl synthase family. [4Fe-4S] cluster serves as cofactor.

Its subcellular location is the cytoplasm. It catalyses the reaction [[Fe-S] cluster scaffold protein carrying a second [4Fe-4S](2+) cluster] + N(6)-octanoyl-L-lysyl-[protein] + 2 oxidized [2Fe-2S]-[ferredoxin] + 2 S-adenosyl-L-methionine + 4 H(+) = [[Fe-S] cluster scaffold protein] + N(6)-[(R)-dihydrolipoyl]-L-lysyl-[protein] + 4 Fe(3+) + 2 hydrogen sulfide + 2 5'-deoxyadenosine + 2 L-methionine + 2 reduced [2Fe-2S]-[ferredoxin]. Its pathway is protein modification; protein lipoylation via endogenous pathway; protein N(6)-(lipoyl)lysine from octanoyl-[acyl-carrier-protein]: step 2/2. In terms of biological role, catalyzes the radical-mediated insertion of two sulfur atoms into the C-6 and C-8 positions of the octanoyl moiety bound to the lipoyl domains of lipoate-dependent enzymes, thereby converting the octanoylated domains into lipoylated derivatives. The chain is Lipoyl synthase from Geotalea daltonii (strain DSM 22248 / JCM 15807 / FRC-32) (Geobacter daltonii).